The following is a 429-amino-acid chain: Dihydroorotase (429 aa).

Zn(2+) contacts are provided by His-62 and His-64. Residues 64-66 (HFR) and Asn-96 contribute to the substrate site. Residues Asp-154, His-181, and His-234 each coordinate Zn(2+). Asn-280 is a substrate binding site. Zn(2+) is bound at residue Asp-307. The active site involves Asp-307. Substrate is bound by residues His-311 and 325 to 326 (FG).

This sequence belongs to the metallo-dependent hydrolases superfamily. DHOase family. Class I DHOase subfamily. The cofactor is Zn(2+).

It catalyses the reaction (S)-dihydroorotate + H2O = N-carbamoyl-L-aspartate + H(+). It participates in pyrimidine metabolism; UMP biosynthesis via de novo pathway; (S)-dihydroorotate from bicarbonate: step 3/3. Its function is as follows. Catalyzes the reversible cyclization of carbamoyl aspartate to dihydroorotate. The sequence is that of Dihydroorotase from Latilactobacillus sakei subsp. sakei (strain 23K) (Lactobacillus sakei subsp. sakei).